We begin with the raw amino-acid sequence, 207 residues long: Guanylate kinase (207 aa).

In terms of domain architecture, Guanylate kinase-like spans 4-184 (GTLYIVSAPS…ALLDLKTIIR (181 aa)). 11 to 18 (APSGAGKS) contacts ATP.

Belongs to the guanylate kinase family.

It localises to the cytoplasm. The enzyme catalyses GMP + ATP = GDP + ADP. Functionally, essential for recycling GMP and indirectly, cGMP. The sequence is that of Guanylate kinase from Sodalis glossinidius (strain morsitans).